A 189-amino-acid chain; its full sequence is ATP synthase subunit delta (189 aa).

Belongs to the ATPase delta chain family. As to quaternary structure, F-type ATPases have 2 components, F(1) - the catalytic core - and F(0) - the membrane proton channel. F(1) has five subunits: alpha(3), beta(3), gamma(1), delta(1), epsilon(1). F(0) has three main subunits: a(1), b(2) and c(10-14). The alpha and beta chains form an alternating ring which encloses part of the gamma chain. F(1) is attached to F(0) by a central stalk formed by the gamma and epsilon chains, while a peripheral stalk is formed by the delta and b chains.

It localises to the cell inner membrane. F(1)F(0) ATP synthase produces ATP from ADP in the presence of a proton or sodium gradient. F-type ATPases consist of two structural domains, F(1) containing the extramembraneous catalytic core and F(0) containing the membrane proton channel, linked together by a central stalk and a peripheral stalk. During catalysis, ATP synthesis in the catalytic domain of F(1) is coupled via a rotary mechanism of the central stalk subunits to proton translocation. In terms of biological role, this protein is part of the stalk that links CF(0) to CF(1). It either transmits conformational changes from CF(0) to CF(1) or is implicated in proton conduction. In Ehrlichia ruminantium (strain Gardel), this protein is ATP synthase subunit delta.